The following is a 242-amino-acid chain: Putative pyrimidine-specific ribonucleoside hydrolase RihB (242 aa).

Substrate-binding residues include Q156 and H168.

It belongs to the IUNH family. RihB subfamily.

The enzyme catalyses a pyrimidine ribonucleoside + H2O = a pyrimidine nucleobase + D-ribose. This Shigella boydii serotype 4 (strain Sb227) protein is Putative pyrimidine-specific ribonucleoside hydrolase RihB (rihB).